Reading from the N-terminus, the 286-residue chain is Bifunctional protein FolD (286 aa).

NADP(+) is bound by residues 166-168 and I232; that span reads GAS.

This sequence belongs to the tetrahydrofolate dehydrogenase/cyclohydrolase family. In terms of assembly, homodimer.

The catalysed reaction is (6R)-5,10-methylene-5,6,7,8-tetrahydrofolate + NADP(+) = (6R)-5,10-methenyltetrahydrofolate + NADPH. The enzyme catalyses (6R)-5,10-methenyltetrahydrofolate + H2O = (6R)-10-formyltetrahydrofolate + H(+). The protein operates within one-carbon metabolism; tetrahydrofolate interconversion. Its function is as follows. Catalyzes the oxidation of 5,10-methylenetetrahydrofolate to 5,10-methenyltetrahydrofolate and then the hydrolysis of 5,10-methenyltetrahydrofolate to 10-formyltetrahydrofolate. This chain is Bifunctional protein FolD, found in Vibrio campbellii (strain ATCC BAA-1116).